The sequence spans 139 residues: Protein archease (139 aa).

Ca(2+)-binding residues include D12, D138, and I139.

It belongs to the archease family.

Activates the tRNA-splicing ligase complex by facilitating the enzymatic turnover of catalytic subunit RtcB. Acts by promoting the guanylylation of RtcB, a key intermediate step in tRNA ligation. Can also alter the NTP specificity of RtcB such that ATP, dGTP or ITP is used efficiently. The chain is Protein archease from Saccharolobus islandicus (strain Y.G.57.14 / Yellowstone #1) (Sulfolobus islandicus).